The chain runs to 177 residues: 2''-aminoglycoside nucleotidyltransferase (177 aa).

Residues D44, D46, and D86 each contribute to the Mg(2+) site. Catalysis depends on D86, which acts as the Proton acceptor.

Mg(2+) is required as a cofactor.

It catalyses the reaction nucleoside triphosphate + gentamicin = diphosphate + 2''-nucleotidylgentamicin.. Functionally, mediates bacterial resistance to kanamycin, gentamicin, dibekacin, sisomicin, neomycin and tobramycin by adenylating the 2''-hydroxyl group of these antibiotics. This is 2''-aminoglycoside nucleotidyltransferase (aadB) from Klebsiella pneumoniae.